The chain runs to 448 residues: Glutamyl-tRNA reductase (448 aa).

Substrate contacts are provided by residues T49–R52, S109, E114–Q116, and Q120. Residue C50 is the Nucleophile of the active site. G189–S194 contacts NADP(+).

It belongs to the glutamyl-tRNA reductase family. In terms of assembly, homodimer.

It catalyses the reaction (S)-4-amino-5-oxopentanoate + tRNA(Glu) + NADP(+) = L-glutamyl-tRNA(Glu) + NADPH + H(+). The protein operates within porphyrin-containing compound metabolism; protoporphyrin-IX biosynthesis; 5-aminolevulinate from L-glutamyl-tRNA(Glu): step 1/2. Its function is as follows. Catalyzes the NADPH-dependent reduction of glutamyl-tRNA(Glu) to glutamate 1-semialdehyde (GSA). The sequence is that of Glutamyl-tRNA reductase from Staphylococcus aureus (strain NCTC 8325 / PS 47).